Reading from the N-terminus, the 126-residue chain is Protein ApaG (126 aa).

Residues 2 to 126 enclose the ApaG domain; that stretch reads SFPIDSIKIK…FRLAMPGVMQ (125 aa).

This is Protein ApaG from Shewanella denitrificans (strain OS217 / ATCC BAA-1090 / DSM 15013).